A 203-amino-acid polypeptide reads, in one-letter code: Superoxide dismutase [Mn] (203 aa).

Positions 27, 81, 164, and 168 each coordinate Mn(2+).

Belongs to the iron/manganese superoxide dismutase family. Requires Mn(2+) as cofactor.

The catalysed reaction is 2 superoxide + 2 H(+) = H2O2 + O2. Functionally, destroys superoxide anion radicals which are normally produced within the cells and which are toxic to biological systems. The protein is Superoxide dismutase [Mn] (sodA) of Xanthomonas campestris pv. campestris (strain 8004).